Reading from the N-terminus, the 252-residue chain is F-box/SPRY domain-containing protein 1 (252 aa).

The F-box domain occupies 1–48 (MVDPLCNYNVLESIFSYLELNDLNRCSQVCKSWYHFLNDENSDVWRWH). The B30.2/SPRY domain maps to 58–250 (VKSDLLSSVT…VSMVYLGTPL (193 aa)).

It belongs to the FBXO45/Fsn family. As to quaternary structure, component of an E3 ubiquitin ligase complex composed of hiw and Fsn.

It localises to the synapse. The protein operates within protein modification; protein ubiquitination. In terms of biological role, required in the presynaptic motoneuron to down-regulate the levels of wnd and restrain synaptic terminal growth at the neuromuscular junction (NMJ). The protein is F-box/SPRY domain-containing protein 1 of Drosophila grimshawi (Hawaiian fruit fly).